The sequence spans 275 residues: COP9 signalosome complex subunit 7a (275 aa).

Residue Ser-2 is modified to N-acetylserine. The PCI domain maps to 2–159 (SAEVKVTGQN…QRLEVDYSIG (158 aa)). Residues 185–233 (LSGIEEQVSRANQHKEQQLGLKQQIESEVANLKKTIKVTTAAAAAATSQ) are a coiled coil. A disordered region spans residues 227–275 (AAAATSQDPEQHLTELREPAPGTNQRQPSKKASKGKGLRGSAKIWSKSN). Residues 235–244 (PEQHLTELRE) are compositionally biased toward basic and acidic residues. Residues 254 to 263 (PSKKASKGKG) are compositionally biased toward basic residues.

The protein belongs to the CSN7/EIF3M family. CSN7 subfamily. In terms of assembly, component of the CSN complex, composed of COPS1/GPS1, COPS2, COPS3, COPS4, COPS5, COPS6, COPS7 (COPS7A or COPS7B), COPS8 and COPS9. In the complex, it probably interacts directly with COPS1, COPS2, COPS4, COPS5, COPS6 and COPS8. Interacts with PMF1. Interacts with the translation initiation factor EIF3S6. Interacts with CK2 and PKD. Interacts directly with ID3. Post-translationally, phosphorylated by CK2 and PKD kinases.

It is found in the cytoplasm. The protein resides in the nucleus. In terms of biological role, component of the COP9 signalosome complex (CSN), a complex involved in various cellular and developmental processes. The CSN complex is an essential regulator of the ubiquitin (Ubl) conjugation pathway by mediating the deneddylation of the cullin subunits of SCF-type E3 ligase complexes, leading to decrease the Ubl ligase activity of SCF-type complexes such as SCF, CSA or DDB2. The complex is also involved in phosphorylation of p53/TP53, JUN, I-kappa-B-alpha/NFKBIA, ITPK1 and IRF8/ICSBP, possibly via its association with CK2 and PKD kinases. CSN-dependent phosphorylation of TP53 and JUN promotes and protects degradation by the Ubl system, respectively. The sequence is that of COP9 signalosome complex subunit 7a (COPS7A) from Pongo abelii (Sumatran orangutan).